The sequence spans 348 residues: Phenylalanine--tRNA ligase alpha subunit (348 aa).

Residue Glu259 participates in Mg(2+) binding.

This sequence belongs to the class-II aminoacyl-tRNA synthetase family. Phe-tRNA synthetase alpha subunit type 1 subfamily. Tetramer of two alpha and two beta subunits. The cofactor is Mg(2+).

Its subcellular location is the cytoplasm. It carries out the reaction tRNA(Phe) + L-phenylalanine + ATP = L-phenylalanyl-tRNA(Phe) + AMP + diphosphate + H(+). This is Phenylalanine--tRNA ligase alpha subunit from Lacticaseibacillus paracasei (strain ATCC 334 / BCRC 17002 / CCUG 31169 / CIP 107868 / KCTC 3260 / NRRL B-441) (Lactobacillus paracasei).